Consider the following 91-residue polypeptide: Transcriptional repressor FrmR (91 aa).

Belongs to the FrmR/RcnR family. Homotetramer.

It is found in the cytoplasm. Its function is as follows. Formaldehyde sensor. In the absence of formaldehyde, mediates repression of the frmRAB operon. Acts by binding directly to the frmRAB promoter region. In the presence of formaldehyde, it dissociates from the frmRAB promoter region and allows expression of the formaldehyde detoxification system encoded by frmA and frmB. The sequence is that of Transcriptional repressor FrmR from Escherichia coli (strain UTI89 / UPEC).